The following is a 287-amino-acid chain: Leukocyte-associated immunoglobulin-like receptor 1 (287 aa).

The first 21 residues, 1–21 (MSPHPTALLGLVLCLAQTIHT), serve as a signal peptide directing secretion. Over 22-165 (QEEDLPRPSI…SQGLKAEHLY (144 aa)) the chain is Extracellular. Residues 29 to 117 (PSISAEPGTV…KWSEQSDYLE (89 aa)) form the Ig-like C2-type domain. Cys49 and Cys101 are disulfide-bonded. N-linked (GlcNAc...) asparagine glycosylation occurs at Asn69. The tract at residues 121-155 (KESSGGPDSPDTEPGSSAGPTQRPSDNSHNEHAPA) is disordered. The segment covering 134–145 (PGSSAGPTQRPS) has biased composition (polar residues). A helical transmembrane segment spans residues 166–186 (ILIGVSVVFLFCLLLLVLFCL). Over 187–287 (HRQNQIKQGP…SITYAAVARH (101 aa)) the chain is Cytoplasmic. The tract at residues 192–211 (IKQGPPRSKDEEQKPQQRPD) is disordered. Basic and acidic residues predominate over residues 198–208 (RSKDEEQKPQQ). 2 consecutive short sequence motifs (ITIM motif) follow at residues 249 to 254 (VTYAQL) and 279 to 284 (ITYAAV). Phosphotyrosine is present on residues Tyr251 and Tyr281.

As to quaternary structure, interacts with SH2 domains of tyrosine-protein phosphatases PTPN6 and PTPN11. The interaction with PTPN6 is constitutive. Interacts with the SH2 domain of CSK. Binds with high affinity to extracellular matrix collagens, the interaction is functionally important. In terms of processing, phosphorylation at Tyr-251 and Tyr-281 activates it. May be phosphorylated by LCK. Post-translationally, N-glycosylated. As to expression, expressed on the majority of peripheral mononuclear cells, including natural killer (NK) cells, T-cells, B-cells, monocytes, and dendritic cells. Highly expressed in naive T-cells and B-cells but no expression on germinal center B-cells. Abnormally low expression in naive B-cells from HIV-1 infected patients. Very low expression in NK cells from a patient with chronic active Epstein-Barr virus infection.

The protein localises to the cell membrane. Functionally, functions as an inhibitory receptor that plays a constitutive negative regulatory role on cytolytic function of natural killer (NK) cells, B-cells and T-cells. Activation by Tyr phosphorylation results in recruitment and activation of the phosphatases PTPN6 and PTPN11. It also reduces the increase of intracellular calcium evoked by B-cell receptor ligation. May also play its inhibitory role independently of SH2-containing phosphatases. Modulates cytokine production in CD4+ T-cells, down-regulating IL2 and IFNG production while inducing secretion of transforming growth factor beta. Also down-regulates IgG and IgE production in B-cells as well as IL8, IL10 and TNF secretion. Inhibits proliferation and induces apoptosis in myeloid leukemia cell lines as well as prevents nuclear translocation of NF-kappa-B p65 subunit/RELA and phosphorylation of I-kappa-B alpha/CHUK in these cells. Inhibits the differentiation of peripheral blood precursors towards dendritic cells. The sequence is that of Leukocyte-associated immunoglobulin-like receptor 1 (LAIR1) from Homo sapiens (Human).